The sequence spans 1057 residues: Carbamoyl phosphate synthase large chain (1057 aa).

Residues 1–401 (MPKRDDIKTI…SLLKAIRSLE (401 aa)) form a carboxyphosphate synthetic domain region. Residues R129, R169, G175, G176, K208, I210, E215, G241, I242, H243, Q284, and E298 each coordinate ATP. The ATP-grasp 1 domain maps to 133–327 (RTLMNDLNVP…IAKLAAKIAV (195 aa)). Residues Q284, E298, and N300 each coordinate Mg(2+). Mn(2+) contacts are provided by Q284, E298, and N300. Residues 402-546 (YGVHHLGLSN…YGTYEYENES (145 aa)) form an oligomerization domain region. The tract at residues 547-929 (IVTDKEKILV…ALYKGLTGSG (383 aa)) is carbamoyl phosphate synthetic domain. The 191-residue stretch at 671-861 (EALLREIAVP…MAQLAMRAIM (191 aa)) folds into the ATP-grasp 2 domain. ATP is bound by residues R707, R746, L748, E752, G777, V778, H779, S780, Q820, and E832. Mg(2+) is bound by residues Q820, E832, and N834. Residues Q820, E832, and N834 each coordinate Mn(2+). One can recognise an MGS-like domain in the interval 930 to 1057 (FEVKDHGTVL…ESMTFTMRNV (128 aa)). The interval 930–1057 (FEVKDHGTVL…ESMTFTMRNV (128 aa)) is allosteric domain.

It belongs to the CarB family. As to quaternary structure, composed of two chains; the small (or glutamine) chain promotes the hydrolysis of glutamine to ammonia, which is used by the large (or ammonia) chain to synthesize carbamoyl phosphate. Tetramer of heterodimers (alpha,beta)4. It depends on Mg(2+) as a cofactor. The cofactor is Mn(2+).

The catalysed reaction is hydrogencarbonate + L-glutamine + 2 ATP + H2O = carbamoyl phosphate + L-glutamate + 2 ADP + phosphate + 2 H(+). The enzyme catalyses hydrogencarbonate + NH4(+) + 2 ATP = carbamoyl phosphate + 2 ADP + phosphate + 2 H(+). Its pathway is amino-acid biosynthesis; L-arginine biosynthesis; carbamoyl phosphate from bicarbonate: step 1/1. It participates in pyrimidine metabolism; UMP biosynthesis via de novo pathway; (S)-dihydroorotate from bicarbonate: step 1/3. Its function is as follows. Large subunit of the glutamine-dependent carbamoyl phosphate synthetase (CPSase). CPSase catalyzes the formation of carbamoyl phosphate from the ammonia moiety of glutamine, carbonate, and phosphate donated by ATP, constituting the first step of 2 biosynthetic pathways, one leading to arginine and/or urea and the other to pyrimidine nucleotides. The large subunit (synthetase) binds the substrates ammonia (free or transferred from glutamine from the small subunit), hydrogencarbonate and ATP and carries out an ATP-coupled ligase reaction, activating hydrogencarbonate by forming carboxy phosphate which reacts with ammonia to form carbamoyl phosphate. This Staphylococcus epidermidis (strain ATCC 12228 / FDA PCI 1200) protein is Carbamoyl phosphate synthase large chain.